The sequence spans 331 residues: DNA fragmentation factor subunit alpha (331 aa).

At methionine 1 the chain carries N-acetylmethionine. One can recognise a CIDE-N domain in the interval threonine 17 to tyrosine 96. Position 243 is a phosphothreonine (threonine 243). Residues serine 305–threonine 331 form a disordered region. Residue serine 315 is modified to Phosphoserine.

In terms of assembly, heterodimer of DFFA and DFFB. In terms of processing, caspase-3 cleaves DFF45 at 2 sites to generate an active factor.

The protein resides in the cytoplasm. In terms of biological role, inhibitor of the caspase-activated DNase (DFF40). The chain is DNA fragmentation factor subunit alpha (DFFA) from Homo sapiens (Human).